A 359-amino-acid chain; its full sequence is 3-dehydroquinate synthase (359 aa).

Residues 71-76 (DGEAHK), 105-109 (GVIGD), 129-130 (TT), Lys-142, Lys-151, and 169-172 (TLHT) each bind NAD(+). Zn(2+) contacts are provided by Glu-184, His-247, and His-264.

Belongs to the sugar phosphate cyclases superfamily. Dehydroquinate synthase family. It depends on Co(2+) as a cofactor. Zn(2+) serves as cofactor. The cofactor is NAD(+).

It is found in the cytoplasm. It carries out the reaction 7-phospho-2-dehydro-3-deoxy-D-arabino-heptonate = 3-dehydroquinate + phosphate. It participates in metabolic intermediate biosynthesis; chorismate biosynthesis; chorismate from D-erythrose 4-phosphate and phosphoenolpyruvate: step 2/7. Catalyzes the conversion of 3-deoxy-D-arabino-heptulosonate 7-phosphate (DAHP) to dehydroquinate (DHQ). This Neisseria gonorrhoeae (strain ATCC 700825 / FA 1090) protein is 3-dehydroquinate synthase.